The primary structure comprises 339 residues: Phenylalanine--tRNA ligase alpha subunit (339 aa).

Glutamate 254 serves as a coordination point for Mg(2+).

Belongs to the class-II aminoacyl-tRNA synthetase family. Phe-tRNA synthetase alpha subunit type 1 subfamily. As to quaternary structure, tetramer of two alpha and two beta subunits. It depends on Mg(2+) as a cofactor.

It localises to the cytoplasm. The enzyme catalyses tRNA(Phe) + L-phenylalanine + ATP = L-phenylalanyl-tRNA(Phe) + AMP + diphosphate + H(+). The sequence is that of Phenylalanine--tRNA ligase alpha subunit from Clostridium botulinum (strain ATCC 19397 / Type A).